The following is a 1105-amino-acid chain: ATP-dependent DNA helicase MPH1 (1105 aa).

One can recognise a Helicase ATP-binding domain in the interval 94 to 261 (IVQRAFYDNL…EIIDNLSISK (168 aa)). 107 to 114 (LPTGLGKT) serves as a coordination point for ATP. The DEAH box signature appears at 209-212 (DEAH). Positions 468-641 (SIERIGSNLR…LITLAQSNRI (174 aa)) constitute a Helicase C-terminal domain. Disordered regions lie at residues 493-534 (EEAY…AQIK), 684-708 (KGKK…EKRF), 758-824 (IQSK…PKLG), 850-880 (LVTG…ECAP), and 918-953 (VSDD…FDEG). Basic residues predominate over residues 499–511 (KGKKGRTKGKATK). Over residues 518–532 (TPERSTSRTSSEDAQ) the composition is skewed to basic and acidic residues. Basic residues predominate over residues 684 to 705 (KGKKVTKSKSKSKSNSKSKKIE). Positions 764-787 (PVKENQSKRPNSEHICEEDSRQET) are enriched in basic and acidic residues. The span at 788 to 799 (ENNSNESNGSFE) shows a compositional bias: low complexity. A compositionally biased stretch (polar residues) spans 927–943 (DSINNQQLHKNKNLGST). Over residues 944–953 (SDDDDAFDEG) the composition is skewed to acidic residues.

It belongs to the DEAD box helicase family. DEAH subfamily. FANCM sub-subfamily. Interacts with the MHF histone-fold complex to form the FANCM-MHF complex.

Its subcellular location is the nucleus. It carries out the reaction ATP + H2O = ADP + phosphate + H(+). ATP-dependent DNA helicase involved in DNA damage repair by homologous recombination and in genome maintenance. Capable of unwinding D-loops. Plays a role in limiting crossover recombinants during mitotic DNA double-strand break (DSB) repair. Component of a FANCM-MHF complex which promotes gene conversion at blocked replication forks, probably by reversal of the stalled fork. The chain is ATP-dependent DNA helicase MPH1 from Debaryomyces hansenii (strain ATCC 36239 / CBS 767 / BCRC 21394 / JCM 1990 / NBRC 0083 / IGC 2968) (Yeast).